Reading from the N-terminus, the 1086-residue chain is ATP-dependent helicase/deoxyribonuclease subunit B (1086 aa).

This sequence belongs to the helicase family. AddB/RexB type 2 subfamily. In terms of assembly, heterodimer of AddA and RexB. Mg(2+) serves as cofactor.

The heterodimer acts as both an ATP-dependent DNA helicase and an ATP-dependent, dual-direction single-stranded exonuclease. Recognizes the chi site generating a DNA molecule suitable for the initiation of homologous recombination. This subunit has 5' -&gt; 3' nuclease activity but not helicase activity. This is ATP-dependent helicase/deoxyribonuclease subunit B from Streptococcus uberis (strain ATCC BAA-854 / 0140J).